The chain runs to 161 residues: Nucleotide-binding protein PSEEN4469 (161 aa).

Belongs to the YajQ family.

Nucleotide-binding protein. The sequence is that of Nucleotide-binding protein PSEEN4469 from Pseudomonas entomophila (strain L48).